Here is a 205-residue protein sequence, read N- to C-terminus: Urease accessory protein UreE (205 aa).

Over residues 170 to 192 the composition is skewed to basic and acidic residues; the sequence is EHHGHSHSHSHDHDHDHDHDHQH. A disordered region spans residues 170 to 205; that stretch reads EHHGHSHSHSHDHDHDHDHDHQHGPCCSHGHHHGHR.

It belongs to the UreE family.

The protein resides in the cytoplasm. Functionally, involved in urease metallocenter assembly. Binds nickel. Probably functions as a nickel donor during metallocenter assembly. This chain is Urease accessory protein UreE, found in Burkholderia pseudomallei (strain 668).